Here is a 218-residue protein sequence, read N- to C-terminus: Thyroid hormone receptor alpha (218 aa).

The 215-residue stretch at 1-215 folds into the NR LBD domain; that stretch reads PEDIGQSPGV…PPLFLEVFED (215 aa). 2 residues coordinate 3,3',5-triiodo-L-thyronine: R36 and S85.

This sequence belongs to the nuclear hormone receptor family. NR1 subfamily.

The protein localises to the nucleus. Functionally, nuclear hormone receptor that can act as a repressor or activator of transcription. High affinity receptor for thyroid hormones, including triiodothyronine and thyroxine. The protein is Thyroid hormone receptor alpha (thra) of Oncorhynchus mykiss (Rainbow trout).